A 434-amino-acid chain; its full sequence is Glutamyl-tRNA reductase (434 aa).

Residues 49–52 (TCNR), serine 109, 114–116 (EPQ), and glutamine 120 each bind substrate. Cysteine 50 serves as the catalytic Nucleophile. Residue 189–194 (GAGEMA) coordinates NADP(+).

The protein belongs to the glutamyl-tRNA reductase family. Homodimer.

The enzyme catalyses (S)-4-amino-5-oxopentanoate + tRNA(Glu) + NADP(+) = L-glutamyl-tRNA(Glu) + NADPH + H(+). It functions in the pathway porphyrin-containing compound metabolism; protoporphyrin-IX biosynthesis; 5-aminolevulinate from L-glutamyl-tRNA(Glu): step 1/2. Catalyzes the NADPH-dependent reduction of glutamyl-tRNA(Glu) to glutamate 1-semialdehyde (GSA). This is Glutamyl-tRNA reductase from Desulfatibacillum aliphaticivorans.